A 742-amino-acid chain; its full sequence is Transcription factor FFUJ_09177 (742 aa).

Residues 15 to 41 (CVSCARSKQRCDGHSPCGRCSLKNLDC) constitute a DNA-binding region (zn(2)-C6 fungal-type). 2 disordered regions span residues 50-80 (GQNSTRGASPQSPSASRESYSQNTLPVVQSQ) and 218-244 (HSLDISSYQGQSNQTSPETTSHSSVRD). The segment covering 218–240 (HSLDISSYQGQSNQTSPETTSHS) has biased composition (polar residues).

The protein resides in the nucleus. Its function is as follows. Transcription factor; part of the DMATS1 gene cluster that mediates the biosynthesis of a reversely N-prenylated monomeric L-tryptophan (r-N-DMAT). Seems not to regulate the expression of the DMATS1 cluster. In Gibberella fujikuroi (strain CBS 195.34 / IMI 58289 / NRRL A-6831) (Bakanae and foot rot disease fungus), this protein is Transcription factor FFUJ_09177.